The chain runs to 98 residues: Co-chaperonin GroES (98 aa).

The protein belongs to the GroES chaperonin family. As to quaternary structure, heptamer of 7 subunits arranged in a ring. Interacts with the chaperonin GroEL.

It is found in the cytoplasm. In terms of biological role, together with the chaperonin GroEL, plays an essential role in assisting protein folding. The GroEL-GroES system forms a nano-cage that allows encapsulation of the non-native substrate proteins and provides a physical environment optimized to promote and accelerate protein folding. GroES binds to the apical surface of the GroEL ring, thereby capping the opening of the GroEL channel. This chain is Co-chaperonin GroES, found in Agrobacterium fabrum (strain C58 / ATCC 33970) (Agrobacterium tumefaciens (strain C58)).